We begin with the raw amino-acid sequence, 87 residues long: Tachykinin-1 (87 aa).

Positions 1 to 22 (MIRVGLILCCIFIAGVFEASSA) are cleaved as a signal peptide. A propeptide spanning residues 23–37 (DDMLTAHNLIKRSEV) is cleaved from the precursor. Met49 bears the Methionine amide mark. The propeptide occupies 52-87 (SEELTRRLIQHPGSMSETSKRGPPKKVSRRPYILKK). Residues 61 to 87 (QHPGSMSETSKRGPPKKVSRRPYILKK) form a disordered region. Residues 73 to 87 (GPPKKVSRRPYILKK) show a composition bias toward basic residues.

The protein belongs to the tachykinin family. Expressed in the posterior salivary gland and more specifically in the mucus-secreting gland cells.

It localises to the secreted. Its function is as follows. Tachykinins are active peptides which excite neurons, evoke behavioral responses, are potent vasodilators and secretagogues, and contract (directly or indirectly) many smooth muscles. The polypeptide is Tachykinin-1 (Octopus vulgaris (Common octopus)).